A 2513-amino-acid polypeptide reads, in one-letter code: Polyprotein P1234 (2513 aa).

Positions E28 to H259 constitute an Alphavirus-like MT domain. Residues G244 to V263 form a nsP1 membrane-binding region. Residues C417 and C419 are each lipidated (S-palmitoyl cysteine; by host). Residues D690–K842 form the (+)RNA virus helicase ATP-binding domain. G721–S728 serves as a coordination point for a ribonucleoside 5'-triphosphate. Positions S843–S991 constitute a (+)RNA virus helicase C-terminal domain. The Peptidase C9 domain occupies D1004–L1327. The segment at T1005–T1024 is nucleolus localization signal. C1013 acts as the For cysteine protease nsP2 activity in catalysis. Positions T1058–S1067 match the Nuclear export signal motif. Catalysis depends on H1083, which acts as the For cysteine protease nsP2 activity. The short motif at P1182 to V1186 is the Nuclear localization signal element. ADP-D-ribose-binding residues include D1343, N1357, G1365, G1445, V1446, and Y1447. 4 residues coordinate Zn(2+): C1595, C1597, C1620, and C1638. 2 short sequence motifs (FGDF; binding to host G3BP1) span residues F1851–F1854 and F1869–F1872. Positions D2267–A2382 constitute a RdRp catalytic domain.

In terms of assembly, interacts with non-structural protein 3. Interacts with RNA-directed RNA polymerase nsP4. Interacts with protease nsP2. interacts with itself. Interacts with mRNA-capping enzyme nsP1. Interacts with host DDX1. Interacts with host DDX3. Interacts (via C-terminus) with host G3BP1; this interaction inhibits the formation of host stress granules on viral mRNAs and the nsp3-G3BP1 complexes bind viral RNAs and probably orchestrate the assembly of viral replication complexes. Interacts (via C-terminus) with host G3BP2; this interaction inhibits the formation of host stress granules on viral mRNAs and the nsp3-G3BP2 complexes bind viral RNAs and probably orchestrate the assembly of viral replication complexes. As to quaternary structure, interacts with mRNA-capping enzyme nsP1. Interacts with protease nsP2. interacts with itself. In terms of assembly, interacts with RNA-directed RNA polymerase nsP4. Interacts with mRNA-capping enzyme nsP1. Interacts with KPNA1/karyopherin-alpha1; this interaction probably allows the active transport of protease nsP2 into the host nucleus. Mg(2+) serves as cofactor. Mn(2+) is required as a cofactor. Specific enzymatic cleavages in vivo yield mature proteins. The processing of the polyprotein is temporally regulated. In early stages (1.7 hpi), P1234 is first cleaved in trans through its nsP2 protease activity, releasing P123 and nsP4, which associate to form the early replication complex. At the same time, P1234 is also cut at the nsP1/nsP2 site early in infection but with lower efficiency. After replication of the viral minus-strand RNAs (4 hpi), the polyproteins are cut at the nsP1/nsP2 and nsP2/nsP3 sites very efficiently, preventing accumulation of P123 and P1234 and allowing the formation of the late replication complex. NsP3/nsP4 site is not cleaved anymore and P34 is produced rather than nsP4. Post-translationally, specific enzymatic cleavages in vivo yield mature proteins. The processing of the polyprotein is temporally regulated. In early stages (1.7 hpi), P123 is cleaved at the nsP1/nsP2 site with low efficiency. After replication of the viral minus-strand RNAs (4 hpi), the polyproteins are cut at the nsP1/nsP2 and nsP2/nsP3 sites very efficiently, preventing accumulation of P123 and allowing the formation of the late replication complex. In terms of processing, palmitoylated by host palmitoyltransferases ZDHHC2 and ZDHHC19. Phosphorylated by host on serines and threonines. Post-translationally, ubiquitinated; targets the protein for rapid degradation via the ubiquitin system. Nsp4 is present in extremely low quantities due to low frequency of translation through the amber stop-codon and the degradation by the ubiquitin pathway.

It localises to the host cytoplasmic vesicle membrane. The protein localises to the host cell membrane. Its subcellular location is the host cell projection. It is found in the host filopodium. The protein resides in the host nucleus. It localises to the host cytoplasm. It carries out the reaction GTP + S-adenosyl-L-methionine = N(7)-methyl-GTP + S-adenosyl-L-homocysteine. It catalyses the reaction N(7)-methyl-GTP + L-histidyl-[protein] = N(tele)-(N(7)-methylguanosine 5'-phospho)-L-histidyl-[protein] + diphosphate. The catalysed reaction is N(tele)-(N(7)-methylguanosine 5'-phospho)-L-histidyl-[protein] + a 5'-end diphospho-(purine-ribonucleoside) in mRNA + H(+) = a 5'-end (N(7)-methyl 5'-triphosphoguanosine)-(purine-ribonucleoside) in mRNA + L-histidyl-[protein]. The enzyme catalyses a 5'-end triphospho-ribonucleoside in mRNA + H2O = a 5'-end diphospho-ribonucleoside in mRNA + phosphate + H(+). It carries out the reaction a ribonucleoside 5'-triphosphate + H2O = a ribonucleoside 5'-diphosphate + phosphate + H(+). It catalyses the reaction ATP + H2O = ADP + phosphate + H(+). The catalysed reaction is RNA(n) + a ribonucleoside 5'-triphosphate = RNA(n+1) + diphosphate. The enzyme catalyses 4-O-(ADP-D-ribosyl)-L-aspartyl-[protein] + H2O = L-aspartyl-[protein] + ADP-D-ribose + H(+). It carries out the reaction 5-O-(ADP-D-ribosyl)-L-glutamyl-[protein] + H2O = L-glutamyl-[protein] + ADP-D-ribose + H(+). It catalyses the reaction RNA(n) + ATP = RNA(n)-3'-adenine ribonucleotide + diphosphate. The catalysed reaction is ADP-alpha-D-ribose 1''-phosphate + H2O = ADP-D-ribose + phosphate. In terms of biological role, inactive precursor of the viral replicase, which is activated by cleavages carried out by the viral protease nsP2. Its function is as follows. The early replication complex formed by the polyprotein P123 and nsP4 synthesizes minus-strand RNAs. As soon P123 is cleaved into mature proteins, the plus-strand RNAs synthesis begins. Cytoplasmic capping enzyme that catalyzes two virus-specific reactions: methyltransferase and nsP1 guanylyltransferase. mRNA-capping is necessary since all viral RNAs are synthesized in the cytoplasm, and host capping enzymes are restricted to the nucleus. The enzymatic reaction involves a covalent link between 7-methyl-GMP and nsP1, whereas eukaryotic capping enzymes form a covalent complex only with GMP. nsP1 capping consists in the following reactions: GTP is first methylated into 7-methyl-GMP and then is covalently linked to nsP1 to form the m7GMp-nsP1 complex from which 7-methyl-GMP complex is transferred to the mRNA to create the cap structure. NsP1 is also needed for the initiation of the minus-strand RNAs synthesis. Probably serves as a membrane anchor for the replication complex composed of nsP1-nsP4. Palmitoylated nsP1 is remodeling host cell cytoskeleton, and induces filopodium-like structure formation at the surface of the host cell. Functionally, multifunctional protein whose N-terminus is part of the RNA polymerase complex and displays NTPase, RNA triphosphatase and helicase activities. NTPase and RNA triphosphatase are involved in viral RNA capping and helicase keeps a check on the dsRNA replication intermediates. The C-terminus harbors a protease that specifically cleaves the polyproteins and releases the mature proteins. Required for the shutoff of minus-strand RNAs synthesis. Specifically inhibits the host IFN response by promoting the nuclear export of host STAT1. Also inhibits host transcription by inducing the rapid proteasome-dependent degradation of POLR2A, a catalytic subunit of the RNAPII complex. The resulting inhibition of cellular protein synthesis serves to ensure maximal viral gene expression and to evade host immune response. In terms of biological role, seems to be essential for minus-strand RNAs and subgenomic 26S mRNAs synthesis. Displays mono-ADP-ribosylhydrolase activity. ADP-ribosylation is a post-translational modification that controls various processes of the host cell and the virus probably needs to revert it for optimal viral replication. Binds proteins of G3BP family and sequesters them into the viral RNA replication complexes thereby inhibiting the formation of host stress granules on viral mRNAs. The nsp3-G3BP complexes bind viral RNAs and probably orchestrate the assembly of viral replication complexes, thanks to the ability of G3BP family members to self-assemble and bind DNA. Its function is as follows. RNA dependent RNA polymerase. Replicates genomic and antigenomic RNA by recognizing replications specific signals. The early replication complex formed by the polyprotein P123 and nsP4 synthesizes minus-strand RNAs. The late replication complex composed of fully processed nsP1-nsP4 is responsible for the production of genomic and subgenomic plus-strand RNAs. The protein is Polyprotein P1234 of Anopheles (Human).